Consider the following 1458-residue polypeptide: RNA-directed RNA polymerase P1 (1458 aa).

The interval 148-168 (LSQDDRDEKGNDNREEEDVKN) is disordered. A RdRp catalytic domain is found at 686–894 (VGIGFATIYQ…KTVISHISGE (209 aa)). The tract at residues 971–993 (DESIENKPNRRGSKAKARSTKTN) is disordered. The segment covering 979–989 (NRRGSKAKARS) has biased composition (basic residues).

Belongs to the reoviridae RNA-directed RNA polymerase family.

The protein localises to the virion. It localises to the host cytoplasm. It carries out the reaction RNA(n) + a ribonucleoside 5'-triphosphate = RNA(n+1) + diphosphate. Functionally, RNA-directed RNA polymerase that is involved in both transcription and genome replication. Together with the capping enzyme P5 and protein P7, forms an enzyme complex positioned near the channels situated at each of the five-fold vertices of the core. This Nephotettix cincticeps (Green rice leafhopper) protein is RNA-directed RNA polymerase P1.